Reading from the N-terminus, the 91-residue chain is ATP synthase subunit c 1 (91 aa).

2 helical membrane passes run 4 to 24 (FTMC…GTAI) and 53 to 73 (IGLA…LIIL).

The protein belongs to the ATPase C chain family. In terms of assembly, F-type ATPases have 2 components, F(1) - the catalytic core - and F(0) - the membrane proton channel. F(1) has five subunits: alpha(3), beta(3), gamma(1), delta(1), epsilon(1). F(0) has three main subunits: a(1), b(2) and c(10-14). The alpha and beta chains form an alternating ring which encloses part of the gamma chain. F(1) is attached to F(0) by a central stalk formed by the gamma and epsilon chains, while a peripheral stalk is formed by the delta and b chains.

It is found in the cell inner membrane. Functionally, f(1)F(0) ATP synthase produces ATP from ADP in the presence of a proton or sodium gradient. F-type ATPases consist of two structural domains, F(1) containing the extramembraneous catalytic core and F(0) containing the membrane proton channel, linked together by a central stalk and a peripheral stalk. During catalysis, ATP synthesis in the catalytic domain of F(1) is coupled via a rotary mechanism of the central stalk subunits to proton translocation. In terms of biological role, key component of the F(0) channel; it plays a direct role in translocation across the membrane. A homomeric c-ring of between 10-14 subunits forms the central stalk rotor element with the F(1) delta and epsilon subunits. This chain is ATP synthase subunit c 1, found in Pelobacter propionicus (strain DSM 2379 / NBRC 103807 / OttBd1).